The primary structure comprises 611 residues: Polyphenol oxidase 4 (611 aa).

Cu cation-binding residues include H57, H82, H91, H251, H255, and H283. A cross-link (2'-(S-cysteinyl)-histidine (Cys-His)) is located at residues 80 to 82 (CTH). A substrate-binding site is contributed by H255. A propeptide spans 380–611 (IKKSEGGKNP…GGLGALGRIF (232 aa)) (removed in mature form).

It belongs to the tyrosinase family. Heterotetramer. Cu(2+) serves as cofactor. In terms of processing, the C-ter is probably cleaved after Gly-379 since the mature active protein is smaller than the protein encoded by the gene.

It catalyses the reaction 2 L-dopa + O2 = 2 L-dopaquinone + 2 H2O. The enzyme catalyses L-tyrosine + O2 = L-dopaquinone + H2O. Copper-containing oxidase that catalyzes both the o-hydroxylation of monophenols and the subsequent oxidation of the resulting o-diphenols into reactive o-quinones, which evolve spontaneously to produce intermediates, which associate in dark brown pigments. Involved in the initial step of melanin synthesis. Melanins constitute a mechanism of defense and resistance to stress such as UV radiations, free radicals, gamma rays, dehydratation and extreme temperatures, and contribute to the fungal cell-wall resistance against hydrolytic enzymes in avoiding cellular lysis. Fungal pigments are also involved in the formation and stability of spores. The sequence is that of Polyphenol oxidase 4 (PPO4) from Agaricus bisporus (White button mushroom).